Reading from the N-terminus, the 505-residue chain is MEPSWLQELMAHPFLLLILLCMSLLLFQVIRLYQRRRWMIRALHLFPAPPAHWFYGHKEFYPVKEFEVYHKLMEKYPCAVPLWVGPFTMFFSVHDPDYAKILLKRQDPKSAVSHKILESWVGRGLVTLDGSKWKKHRQIVKPGFNISILKIFITMMSESVRMMLNKWEEHIAQNSRLELFQHVSLMTLDSIMKCAFSHQGSIQLDSTLDSYLKAVFNLSKISNQRMNNFLHHNDLVFKFSSQGQIFSKFNQELHQFTEKVIQDRKESLKDKLKQDTTQKRRWDFLDILLSAKSENTKDFSEADLQAEVKTFMFAGHDTTSSAISWILYCLAKYPEHQQRCRDEIRELLGDGSSITWEHLSQMPYTTMCIKECLRLYAPVVNISRLLDKPITFPDGRSLPAGITVFINIWALHHNPYFWEDPQVFNPLRFSRENSEKIHPYAFIPFSAGLRNCIGQHFAIIECKVAVALTLLRFKLAPDHSRPPQPVRQVVLKSKNGIHVFAKKVC.

Residues 1–9 (MEPSWLQEL) are Cytoplasmic-facing. A helical; Signal-anchor for type II membrane protein transmembrane segment spans residues 10-30 (MAHPFLLLILLCMSLLLFQVI). Residues 31–505 (RLYQRRRWMI…GIHVFAKKVC (475 aa)) are Lumenal-facing. Heme is bound at residue Cys452.

The protein belongs to the cytochrome P450 family. Heme is required as a cofactor. Preferentially detected in breast carcinoma tissue and mammary gland, whereas only marginal expression is found in all other tested tissues.

Its subcellular location is the endoplasmic reticulum membrane. It localises to the microsome membrane. It catalyses the reaction an organic molecule + reduced [NADPH--hemoprotein reductase] + O2 = an alcohol + oxidized [NADPH--hemoprotein reductase] + H2O + H(+). It carries out the reaction dodecanoate + reduced [NADPH--hemoprotein reductase] + O2 = 7-hydroxydodecanoate + oxidized [NADPH--hemoprotein reductase] + H2O + H(+). The catalysed reaction is dodecanoate + reduced [NADPH--hemoprotein reductase] + O2 = 8-hydroxydodecanoate + oxidized [NADPH--hemoprotein reductase] + H2O + H(+). The enzyme catalyses dodecanoate + reduced [NADPH--hemoprotein reductase] + O2 = 9-hydroxydodecanoate + oxidized [NADPH--hemoprotein reductase] + H2O + H(+). It catalyses the reaction dodecanoate + reduced [NADPH--hemoprotein reductase] + O2 = 10-hydroxydodecanoate + oxidized [NADPH--hemoprotein reductase] + H2O + H(+). It carries out the reaction dodecanoate + reduced [NADPH--hemoprotein reductase] + O2 = 11-hydroxydodecanoate + oxidized [NADPH--hemoprotein reductase] + H2O + H(+). The catalysed reaction is tetradecanoate + reduced [NADPH--hemoprotein reductase] + O2 = 9-hydroxytetradecanoate + oxidized [NADPH--hemoprotein reductase] + H2O + H(+). The enzyme catalyses tetradecanoate + reduced [NADPH--hemoprotein reductase] + O2 = 10-hydroxytetradecanoate + oxidized [NADPH--hemoprotein reductase] + H2O + H(+). It catalyses the reaction tetradecanoate + reduced [NADPH--hemoprotein reductase] + O2 = 11-hydroxytetradecanoate + oxidized [NADPH--hemoprotein reductase] + H2O + H(+). It carries out the reaction tetradecanoate + reduced [NADPH--hemoprotein reductase] + O2 = 12-hydroxytetradecanoate + oxidized [NADPH--hemoprotein reductase] + H2O + H(+). The catalysed reaction is (5Z,8Z,11Z,14Z)-eicosatetraenoate + reduced [NADPH--hemoprotein reductase] + O2 = (14S,15R)-epoxy-(5Z,8Z,11Z)-eicosatrienoate + oxidized [NADPH--hemoprotein reductase] + H2O + H(+). A cytochrome P450 monooxygenase that catalyzes the in-chain oxidation of fatty acids. Catalyzes the hydroxylation of carbon-hydrogen bonds. Hydroxylates lauric and myristic acids predominantly at the omega-4 and omega-2 positions, respectively. Catalyzes the epoxidation of double bonds of polyunsaturated fatty acids (PUFA). Displays an absolute stereoselectivity in the epoxidation of arachidonic acid producing the 14(S),15(R)-epoxyeicosatrienoic acid (EET) enantiomer. Mechanistically, uses molecular oxygen inserting one oxygen atom into a substrate, and reducing the second into a water molecule, with two electrons provided by NADPH via cytochrome P450 reductase (CPR; NADPH-ferrihemoprotein reductase). The protein is Cytochrome P450 4Z1 of Homo sapiens (Human).